Reading from the N-terminus, the 206-residue chain is Ion-translocating oxidoreductase complex subunit G (206 aa).

Residues 9-29 (GITLALFAAGSTGLTAVINQM) traverse the membrane as a helical segment. Thr174 is modified (FMN phosphoryl threonine).

The protein belongs to the RnfG family. In terms of assembly, the complex is composed of six subunits: RsxA, RsxB, RsxC, RsxD, RsxE and RsxG. Requires FMN as cofactor.

The protein resides in the cell inner membrane. In terms of biological role, part of a membrane-bound complex that couples electron transfer with translocation of ions across the membrane. Required to maintain the reduced state of SoxR. This is Ion-translocating oxidoreductase complex subunit G from Salmonella typhi.